The sequence spans 350 residues: MFIDSVKITLASGDGGKGAVSFRREKHVPLGGPDGGDGGNGGDIIFVCDNNTHTLVNFKGKRELRAQNGAGGMGRNKNGKKGENLELIVPEGTQVIDAQTNEILLDLTKEGQRELFLKGGKGGLGNTHFKHATNQRPDYAQPGIKGESRLVRLELKLIADVGLVGFPNVGKSTLISVVSNAKPEIANYEFTTLTPKLGLVDVNEYNSFVMADIPGIIEGASGGKGLGLAFLKHIERTSFLLFVLDPMRQMPLKEQFIVLRKELEKFSNELFGRKFGIMISKSDSVRLGEEFAEQIALNINELDNYLKEINNPQSFLIKVSSLEKTGLKELKFMLLEEIKTLRNNKKNLTI.

Residues 1-158 (MFIDSVKITL…RLVRLELKLI (158 aa)) enclose the Obg domain. An OBG-type G domain is found at 159-339 (ADVGLVGFPN…LKFMLLEEIK (181 aa)). GTP contacts are provided by residues 165-172 (GFPNVGKS), 190-194 (FTTLT), 212-215 (DIPG), 280-283 (SKSD), and 320-322 (SSL). Mg(2+)-binding residues include Ser172 and Thr192.

Belongs to the TRAFAC class OBG-HflX-like GTPase superfamily. OBG GTPase family. In terms of assembly, monomer. Mg(2+) is required as a cofactor.

Its subcellular location is the cytoplasm. Its function is as follows. An essential GTPase which binds GTP, GDP and possibly (p)ppGpp with moderate affinity, with high nucleotide exchange rates and a fairly low GTP hydrolysis rate. Plays a role in control of the cell cycle, stress response, ribosome biogenesis and in those bacteria that undergo differentiation, in morphogenesis control. In Campylobacter jejuni subsp. jejuni serotype O:2 (strain ATCC 700819 / NCTC 11168), this protein is GTPase Obg.